An 866-amino-acid polypeptide reads, in one-letter code: Primer-independent DNA polymerase PolB (866 aa).

Residues Ser50 to Met286 form an exonuclease domain region. The segment at Ala287–Tyr385 is palm1 domain. Residues Gly386–Pro481 are TPR1 domain. Positions Phe482–Thr522 are fingers domain. The tract at residues Ala523–Thr549 is TPR2 domain. The interval Gly550–Leu678 is palm2 domain. Residues Ile679–Val866 are thumb domain.

Mn(2+) serves as cofactor.

It catalyses the reaction DNA(n) + a 2'-deoxyribonucleoside 5'-triphosphate = DNA(n+1) + diphosphate. Functionally, DNA polymerase with primer-independent templated DNA polymerization activity, primer-dependent DNA polymerization activity with strand displacement, translesion synthesis activity across non-bulky base damage, 3'-5' exodeoxyribonuclease activity, and de novo primer synthesis activity. The enzyme is processive and faithful. Translation synthesis across abasic sites is coupled to de novo primer synthesis. Overexpression of wild-type protein increases survival of cells upon mitomycin C or UV treatment. This is Primer-independent DNA polymerase PolB (pi-polB) from Escherichia coli.